The chain runs to 118 residues: Iron-sulfur cluster assembly protein CyaY (118 aa).

This sequence belongs to the frataxin family.

Its function is as follows. Involved in iron-sulfur (Fe-S) cluster assembly. May act as a regulator of Fe-S biogenesis. This chain is Iron-sulfur cluster assembly protein CyaY, found in Buchnera aphidicola subsp. Baizongia pistaciae (strain Bp).